The primary structure comprises 637 residues: Glutamate--cysteine ligase catalytic subunit (637 aa).

Position 1 is an N-acetylmethionine (methionine 1). A phosphoserine mark is found at serine 5 and serine 8.

The protein belongs to the glutamate--cysteine ligase type 3 family. In terms of assembly, heterodimer of a catalytic heavy chain and a regulatory light chain.

The enzyme catalyses L-cysteine + L-glutamate + ATP = gamma-L-glutamyl-L-cysteine + ADP + phosphate + H(+). The catalysed reaction is (2S)-2-aminobutanoate + L-glutamate + ATP = gamma-L-glutamyl-(2S)-2-aminobutanoate + ADP + phosphate + H(+). It participates in sulfur metabolism; glutathione biosynthesis; glutathione from L-cysteine and L-glutamate: step 1/2. With respect to regulation, feedback inhibition by glutathione. In terms of biological role, catalyzes the ATP-dependent ligation of L-glutamate and L-cysteine and participates in the first and rate-limiting step in glutathione biosynthesis. This is Glutamate--cysteine ligase catalytic subunit from Mus musculus (Mouse).